The following is a 497-amino-acid chain: MTAATLAQLRVDNSFAALPAAFYTRLAPQPLTAPRLLHANEQAAALIGLSADALRSDEFLRVFSGQQPLPGGQTLAAVYSGHQFGVWAGQLGDGRAHLLGEVAGPDGNWELQLKGAGMTPYSRMGDGRAVLRSSVREYLASEAMHGLGIPTTRSLALVVSDDPVMRETVETAAIVTRMSPSFVRFGSFEHWSSRRQPDELRILADYVIDKFYPECREPRPGEAPGPDGALLRMLAEVTRRTAELMAGWQAVGFCHGVMNTDNMSILGLTLDYGPYGFMDAFRLDHICNHSDSEGRYAWNRQPSVALWNLYRLGGSLHALVPDVEALRAVLDSYEVIFTRAFHQRMAAKLGLREWRADDEPLLDDLLRLMHDNRADFTLTFRRLADAVRGRPQGLQDLFIDRDAALAWFERLAARHAQEGAGNDAQARAAGMDAVNPLYVLRNHLAEQAIRAAKAGDAGEIDTLLALLRDPCVEQPGRDAYAALPPDWAGGIEVSCSS.

Residues Gly-92, Gly-94, Arg-95, Lys-114, Asp-126, Gly-127, Arg-177, and Arg-184 each coordinate ATP. Asp-261 functions as the Proton acceptor in the catalytic mechanism. Mg(2+) is bound by residues Asn-262 and Asp-271. Asp-271 is an ATP binding site.

This sequence belongs to the SELO family. The cofactor is Mg(2+). It depends on Mn(2+) as a cofactor.

The enzyme catalyses L-seryl-[protein] + ATP = 3-O-(5'-adenylyl)-L-seryl-[protein] + diphosphate. It carries out the reaction L-threonyl-[protein] + ATP = 3-O-(5'-adenylyl)-L-threonyl-[protein] + diphosphate. It catalyses the reaction L-tyrosyl-[protein] + ATP = O-(5'-adenylyl)-L-tyrosyl-[protein] + diphosphate. The catalysed reaction is L-histidyl-[protein] + UTP = N(tele)-(5'-uridylyl)-L-histidyl-[protein] + diphosphate. The enzyme catalyses L-seryl-[protein] + UTP = O-(5'-uridylyl)-L-seryl-[protein] + diphosphate. It carries out the reaction L-tyrosyl-[protein] + UTP = O-(5'-uridylyl)-L-tyrosyl-[protein] + diphosphate. Nucleotidyltransferase involved in the post-translational modification of proteins. It can catalyze the addition of adenosine monophosphate (AMP) or uridine monophosphate (UMP) to a protein, resulting in modifications known as AMPylation and UMPylation. The protein is Protein nucleotidyltransferase YdiU of Bordetella petrii (strain ATCC BAA-461 / DSM 12804 / CCUG 43448).